The chain runs to 108 residues: Signal recognition particle 19 kDa protein (108 aa).

The protein belongs to the SRP19 family. In terms of assembly, part of the signal recognition particle protein translocation system, which is composed of SRP and FtsY. Archaeal SRP consists of a 7S RNA molecule of 300 nucleotides and two protein subunits: SRP54 and SRP19.

It is found in the cytoplasm. Involved in targeting and insertion of nascent membrane proteins into the cytoplasmic membrane. Binds directly to 7S RNA and mediates binding of the 54 kDa subunit of the SRP. The protein is Signal recognition particle 19 kDa protein of Thermococcus kodakarensis (strain ATCC BAA-918 / JCM 12380 / KOD1) (Pyrococcus kodakaraensis (strain KOD1)).